The chain runs to 256 residues: 1-(5-phosphoribosyl)-5-[(5-phosphoribosylamino)methylideneamino] imidazole-4-carboxamide isomerase (256 aa).

Residue D8 is the Proton acceptor of the active site. D129 functions as the Proton donor in the catalytic mechanism.

The protein belongs to the HisA/HisF family.

The protein localises to the cytoplasm. The catalysed reaction is 1-(5-phospho-beta-D-ribosyl)-5-[(5-phospho-beta-D-ribosylamino)methylideneamino]imidazole-4-carboxamide = 5-[(5-phospho-1-deoxy-D-ribulos-1-ylimino)methylamino]-1-(5-phospho-beta-D-ribosyl)imidazole-4-carboxamide. Its pathway is amino-acid biosynthesis; L-histidine biosynthesis; L-histidine from 5-phospho-alpha-D-ribose 1-diphosphate: step 4/9. The protein is 1-(5-phosphoribosyl)-5-[(5-phosphoribosylamino)methylideneamino] imidazole-4-carboxamide isomerase of Synechococcus sp. (strain CC9311).